The chain runs to 873 residues: MSNKPDANDQCMVKETISRMSMSKEKPFLRRNYSSPSFNDSVNSVNDEFQTYQLPNGEFSDNMNDLYFPFRKGNESLMTENSNYPISEQDTQHNHISDFPSRRMQLDGMNHSNNDTYSTAIPFSKDSSVFDAVGQQSSVPIHINPAYTNSHQNSYSLNETYLSYDFFDNHRGASSSAVSKDGLASPRPTKDVDADDTTWYFTSSPSFQPLKDSDRSQTKNTHEETSPIVSSPEDDADAAFKPSSLPSTSISASSNAFYKPAAPDNERPLDPHITPYLRLQLLTTGADDNDIRKNALTQVDYLSYDWKETDIWASWREITKTKANYDNGIRLENASWRTWMKHKFKLKTISPETLNWLKECDVTWLYGPLLHTSMPSRHHSHRKKEKEKEKSKAPRVTPLTHKTNDDEANHSETSSGSSLAKKPILKRRTPQELLLSGRDLTPWPQIRRFDSLLARNRGDIFSNRNHATIRSALFSQRYPSHSKRHIHFNDRVQQCIAVDIDSLPSDSESASYNTDDANSVVSPSKDGISTTTVSSDATRSSQSSHFRIIEDLPDSKLKYSLEDQATYDQSSRYPGRHFGKTGRSHFPRAPEYYGENDFEEDEVYRDDRHYENEHDEYDPNLIYYDNEPTEENRLVFEDTNNTFIDTDSDDSNADESQFLEYANDSPNSSESLESLNNQSYSSSPYSVFSHPPPYMGRQSLNDSPQTSDFKASNLNDSSSNVHSIFQTRETTSPSVQNKTPTKYHRELKSSKDGHEQASPLVSSSPSGSFTSQISPAATTTATNLDAVSLSPSTVRTGSQISDIGNDAISTTRKTVRAFLENANPYSTNNDGNPSNNTSDVEVNETSMNDNSEEPISSNWLVDLFQKSLKSFRE.

Disordered regions lie at residues 1–24 (MSNKPDANDQCMVKETISRMSMSK), 175–251 (SSAV…TSIS), 375–423 (PSRH…AKKP), 506–540 (DSESASYNTDDANSVVSPSKDGISTTTVSSDATRS), 568–592 (DQSSRYPGRHFGKTGRSHFPRAPEY), 662–773 (ANDS…TSQI), and 822–855 (ANPYSTNNDGNPSNNTSDVEVNETSMNDNSEEPI). A compositionally biased stretch (basic and acidic residues) spans 211-225 (KDSDRSQTKNTHEET). Positions 376-385 (SRHHSHRKKE) are enriched in basic residues. The span at 574-586 (PGRHFGKTGRSHF) shows a compositional bias: basic residues. Over residues 665-686 (SPNSSESLESLNNQSYSSSPYS) the composition is skewed to low complexity. Positions 698–740 (QSLNDSPQTSDFKASNLNDSSSNVHSIFQTRETTSPSVQNKTP) are enriched in polar residues. A compositionally biased stretch (basic and acidic residues) spans 743–755 (YHRELKSSKDGHE). Residues 758-773 (SPLVSSSPSGSFTSQI) are compositionally biased toward low complexity. Polar residues predominate over residues 823 to 855 (NPYSTNNDGNPSNNTSDVEVNETSMNDNSEEPI).

The protein resides in the cytoplasm. The protein localises to the vacuole membrane. This is an uncharacterized protein from Schizosaccharomyces pombe (strain 972 / ATCC 24843) (Fission yeast).